The following is a 255-amino-acid chain: Snake venom serine protease HS112 (255 aa).

The first 18 residues, 1 to 18 (MVLIRVIANLLILQLSYA), serve as a signal peptide directing secretion. A propeptide spanning residues 19–24 (QKSSEL) is cleaved from the precursor. Residues 25–246 (VIGGDECDIN…YLPWIQSIIA (222 aa)) form the Peptidase S1 domain. 6 cysteine pairs are disulfide-bonded: C31–C162, C49–C65, C97–C253, C141–C207, C173–C186, and C197–C222. Catalysis depends on charge relay system residues H64 and D109. A glycan (N-linked (GlcNAc...) asparagine) is linked at N169. S201 (charge relay system) is an active-site residue. An N-linked (GlcNAc...) asparagine glycan is attached at N248.

It belongs to the peptidase S1 family. Snake venom subfamily. Monomer. In terms of tissue distribution, expressed by the venom gland.

Its subcellular location is the secreted. Functionally, snake venom serine protease that may act in the hemostasis system of the prey. This is Snake venom serine protease HS112 from Bothrops jararaca (Jararaca).